Reading from the N-terminus, the 268-residue chain is Hydroxyethylthiazole kinase (268 aa).

Met-45 is a substrate binding site. ATP is bound by residues Arg-121 and Thr-167. Residue Gly-194 coordinates substrate.

It belongs to the Thz kinase family. Mg(2+) serves as cofactor.

It catalyses the reaction 5-(2-hydroxyethyl)-4-methylthiazole + ATP = 4-methyl-5-(2-phosphooxyethyl)-thiazole + ADP + H(+). The protein operates within cofactor biosynthesis; thiamine diphosphate biosynthesis; 4-methyl-5-(2-phosphoethyl)-thiazole from 5-(2-hydroxyethyl)-4-methylthiazole: step 1/1. Functionally, catalyzes the phosphorylation of the hydroxyl group of 4-methyl-5-beta-hydroxyethylthiazole (THZ). The protein is Hydroxyethylthiazole kinase of Bacillus cereus (strain ATCC 10987 / NRS 248).